Reading from the N-terminus, the 500-residue chain is NAD(P)H-quinone oxidoreductase chain 4, chloroplastic (500 aa).

14 helical membrane passes run 4–24 (FPWLTIIVVFPIFAGSLIFFL), 35–55 (YTICICILELLLTTYAFCYHF), 87–107 (IGPILLTGFITTLATLAAWPV), 113–130 (LFHFLMLAMYSGQIGLFS), 134–154 (LLLFFIMWELELIPVYLLLAM), 167–187 (FILYTAGGSVFLLMGVLGVAL), 208–228 (VLEIIFYIGFFIAFAVKSPII), 242–262 (HYSTCMLLAGILLKMGAYGLI), 272–292 (AHSIFSPWLMIIGTIQIIYAA), 305–325 (IAYSSVSHMGFIIIGISSLTD), 330–350 (GALLQIISHGFIGAALFFLAG), 386–406 (LALPGMSGFVAELIVFFGIIT), 416–436 (LLITFVMAIGIILTPIYSLSM), and 462–482 (LFLSISIFLPVIGIGIYPDFV).

Belongs to the complex I subunit 4 family.

It is found in the plastid. It localises to the chloroplast thylakoid membrane. It catalyses the reaction a plastoquinone + NADH + (n+1) H(+)(in) = a plastoquinol + NAD(+) + n H(+)(out). The catalysed reaction is a plastoquinone + NADPH + (n+1) H(+)(in) = a plastoquinol + NADP(+) + n H(+)(out). The sequence is that of NAD(P)H-quinone oxidoreductase chain 4, chloroplastic from Solanum lycopersicum (Tomato).